We begin with the raw amino-acid sequence, 259 residues long: Kynurenine formamidase (259 aa).

The HGGXW signature appears at 34–38; that stretch reads HGGAW. S103 functions as the Nucleophile in the catalytic mechanism. Residues D196 and H228 contribute to the active site.

This sequence belongs to the kynurenine formamidase family. As to quaternary structure, homodimer.

The enzyme catalyses N-formyl-L-kynurenine + H2O = L-kynurenine + formate + H(+). The protein operates within amino-acid degradation; L-tryptophan degradation via kynurenine pathway; L-kynurenine from L-tryptophan: step 2/2. Functionally, catalyzes the hydrolysis of N-formyl-L-kynurenine to L-kynurenine, the second step in the kynurenine pathway of tryptophan degradation. Kynurenine may be further oxidized to nicotinic acid, NAD(H) and NADP(H). Required for elimination of toxic metabolites. The polypeptide is Kynurenine formamidase (Meyerozyma guilliermondii (strain ATCC 6260 / CBS 566 / DSM 6381 / JCM 1539 / NBRC 10279 / NRRL Y-324) (Yeast)).